Here is a 377-residue protein sequence, read N- to C-terminus: Succinyl-diaminopimelate desuccinylase (377 aa).

Zn(2+) is bound at residue His-67. Asp-69 is a catalytic residue. Residue Asp-100 participates in Zn(2+) binding. The active-site Proton acceptor is the Glu-134. Zn(2+)-binding residues include Glu-135, Glu-163, and His-349.

This sequence belongs to the peptidase M20A family. DapE subfamily. Homodimer. Zn(2+) is required as a cofactor. Requires Co(2+) as cofactor.

The enzyme catalyses N-succinyl-(2S,6S)-2,6-diaminopimelate + H2O = (2S,6S)-2,6-diaminopimelate + succinate. It functions in the pathway amino-acid biosynthesis; L-lysine biosynthesis via DAP pathway; LL-2,6-diaminopimelate from (S)-tetrahydrodipicolinate (succinylase route): step 3/3. Catalyzes the hydrolysis of N-succinyl-L,L-diaminopimelic acid (SDAP), forming succinate and LL-2,6-diaminopimelate (DAP), an intermediate involved in the bacterial biosynthesis of lysine and meso-diaminopimelic acid, an essential component of bacterial cell walls. In Shewanella frigidimarina (strain NCIMB 400), this protein is Succinyl-diaminopimelate desuccinylase.